Consider the following 72-residue polypeptide: ATP synthase subunit c (72 aa).

The next 2 helical transmembrane spans lie at 5-25 (LLAA…IGIA) and 52-72 (GLSE…LFVV).

This sequence belongs to the ATPase C chain family. F-type ATPases have 2 components, F(1) - the catalytic core - and F(0) - the membrane proton channel. F(1) has five subunits: alpha(3), beta(3), gamma(1), delta(1), epsilon(1). F(0) has three main subunits: a(1), b(2) and c(10-14). The alpha and beta chains form an alternating ring which encloses part of the gamma chain. F(1) is attached to F(0) by a central stalk formed by the gamma and epsilon chains, while a peripheral stalk is formed by the delta and b chains.

The protein localises to the cell membrane. F(1)F(0) ATP synthase produces ATP from ADP in the presence of a proton or sodium gradient. F-type ATPases consist of two structural domains, F(1) containing the extramembraneous catalytic core and F(0) containing the membrane proton channel, linked together by a central stalk and a peripheral stalk. During catalysis, ATP synthesis in the catalytic domain of F(1) is coupled via a rotary mechanism of the central stalk subunits to proton translocation. Functionally, key component of the F(0) channel; it plays a direct role in translocation across the membrane. A homomeric c-ring of between 10-14 subunits forms the central stalk rotor element with the F(1) delta and epsilon subunits. The polypeptide is ATP synthase subunit c (Clostridium perfringens (strain SM101 / Type A)).